Consider the following 115-residue polypeptide: MIIGIGIDVVDVERFRRQLERTPGLLDRLFVPAERSLNTRSLAARFAAKEAVAKALGAPAGMNWQDCWIGLDVNGPTVQTKNTVAAVAEAQGVKRWHLSMSHDGGISTAFVIAES.

Aspartate 8 and glutamate 50 together coordinate Mg(2+).

The protein belongs to the P-Pant transferase superfamily. AcpS family. Mg(2+) is required as a cofactor.

It localises to the cytoplasm. It catalyses the reaction apo-[ACP] + CoA = holo-[ACP] + adenosine 3',5'-bisphosphate + H(+). In terms of biological role, transfers the 4'-phosphopantetheine moiety from coenzyme A to a Ser of acyl-carrier-protein. This is Holo-[acyl-carrier-protein] synthase from Renibacterium salmoninarum (strain ATCC 33209 / DSM 20767 / JCM 11484 / NBRC 15589 / NCIMB 2235).